The sequence spans 123 residues: Small ribosomal subunit protein uS12 (123 aa).

A 3-methylthioaspartic acid modification is found at Asp-89. The segment at 102 to 123 (LDTSGVQDRRQRRSKYGAKRPK) is disordered. Residues 111-123 (RQRRSKYGAKRPK) show a composition bias toward basic residues.

Belongs to the universal ribosomal protein uS12 family. In terms of assembly, part of the 30S ribosomal subunit. Contacts proteins S8 and S17. May interact with IF1 in the 30S initiation complex.

In terms of biological role, with S4 and S5 plays an important role in translational accuracy. Its function is as follows. Interacts with and stabilizes bases of the 16S rRNA that are involved in tRNA selection in the A site and with the mRNA backbone. Located at the interface of the 30S and 50S subunits, it traverses the body of the 30S subunit contacting proteins on the other side and probably holding the rRNA structure together. The combined cluster of proteins S8, S12 and S17 appears to hold together the shoulder and platform of the 30S subunit. The protein is Small ribosomal subunit protein uS12 of Lawsonia intracellularis (strain PHE/MN1-00).